The chain runs to 882 residues: Pyruvate dehydrogenase E1 component (882 aa).

Homodimer. Part of the PDH complex, consisting of multiple copies of pyruvate dehydrogenase (E1), dihydrolipoamide acetyltransferase (E2) and lipoamide dehydrogenase (E3). The cofactor is thiamine diphosphate.

The catalysed reaction is N(6)-[(R)-lipoyl]-L-lysyl-[protein] + pyruvate + H(+) = N(6)-[(R)-S(8)-acetyldihydrolipoyl]-L-lysyl-[protein] + CO2. Its function is as follows. Component of the pyruvate dehydrogenase (PDH) complex, that catalyzes the overall conversion of pyruvate to acetyl-CoA and CO(2). The sequence is that of Pyruvate dehydrogenase E1 component (aceE) from Pseudomonas aeruginosa (strain ATCC 15692 / DSM 22644 / CIP 104116 / JCM 14847 / LMG 12228 / 1C / PRS 101 / PAO1).